Consider the following 211-residue polypeptide: Probable molybdenum cofactor guanylyltransferase (211 aa).

Residues 21–23 (LAG), Lys-33, Asp-84, and Asp-116 each bind GTP. A Mg(2+)-binding site is contributed by Asp-116.

Belongs to the MobA family. Requires Mg(2+) as cofactor.

Its subcellular location is the cytoplasm. The enzyme catalyses Mo-molybdopterin + GTP + H(+) = Mo-molybdopterin guanine dinucleotide + diphosphate. In terms of biological role, transfers a GMP moiety from GTP to Mo-molybdopterin (Mo-MPT) cofactor (Moco or molybdenum cofactor) to form Mo-molybdopterin guanine dinucleotide (Mo-MGD) cofactor. The polypeptide is Probable molybdenum cofactor guanylyltransferase (Rhodopirellula baltica (strain DSM 10527 / NCIMB 13988 / SH1)).